Consider the following 98-residue polypeptide: MYRETFVFCVLLAVVSANVEMRDLEEKPEKYKGVNCCYVSAIQECIPVGETRPFKHECKGWTCNKDNLLEVSCGKVLVEHYVEDKTAPYPHCCPVAKA.

The signal sequence occupies residues 1–17 (MYRETFVFCVLLAVVSA).

This sequence belongs to the caterpillar 1 family. Post-translationally, contains 4 disulfide bonds. As to expression, expressed by the venom apparatus.

The protein localises to the secreted. Probable toxin. In Megalopyge opercularis (Southern flannel moth), this protein is U-megalopygitoxin(1)-Mo1.